The following is a 206-amino-acid chain: NADH-quinone oxidoreductase subunit C (206 aa).

This sequence belongs to the complex I 30 kDa subunit family. NDH-1 is composed of 14 different subunits. Subunits NuoB, C, D, E, F, and G constitute the peripheral sector of the complex.

It localises to the cell inner membrane. It carries out the reaction a quinone + NADH + 5 H(+)(in) = a quinol + NAD(+) + 4 H(+)(out). In terms of biological role, NDH-1 shuttles electrons from NADH, via FMN and iron-sulfur (Fe-S) centers, to quinones in the respiratory chain. The immediate electron acceptor for the enzyme in this species is believed to be ubiquinone. Couples the redox reaction to proton translocation (for every two electrons transferred, four hydrogen ions are translocated across the cytoplasmic membrane), and thus conserves the redox energy in a proton gradient. The chain is NADH-quinone oxidoreductase subunit C from Bordetella avium (strain 197N).